The sequence spans 401 residues: Tumor necrosis factor receptor superfamily member 11B (401 aa).

The signal sequence occupies residues 1–21 (MNKWLCCALLVFLDIIEWTTQ). TNFR-Cys repeat units follow at residues 24–62 (FPPK…KTLC), 65–105 (CPDY…NRVC), 107–142 (CEEG…NTVC), and 145–185 (CPDG…DNVC). 8 cysteine pairs are disulfide-bonded: Cys41–Cys54, Cys44–Cys62, Cys65–Cys80, Cys83–Cys97, Cys87–Cys105, Cys107–Cys118, Cys124–Cys142, and Cys145–Cys160. N-linked (GlcNAc...) asparagine glycosylation is present at Asn98. N-linked (GlcNAc...) asparagine glycans are attached at residues Asn165 and Asn178. The cysteines at positions 166 and 185 are disulfide-linked. 2 Death domains span residues 198-269 (DVTL…MVKK) and 270-365 (IIQD…THSL). Asn289 is a glycosylation site (N-linked (GlcNAc...) asparagine).

Homodimer. Interacts with TNFSF10 and TNFSF11.

The protein resides in the secreted. Its function is as follows. Acts as a decoy receptor for TNFSF11/RANKL and thereby neutralizes its function in osteoclastogenesis. Inhibits the activation of osteoclasts and promotes osteoclast apoptosis in vitro. Bone homeostasis seems to depend on the local ratio between TNFSF11 and TNFRSF11B. May also play a role in preventing arterial calcification. May act as decoy receptor for TNFSF10/TRAIL and protect against apoptosis. TNFSF10/TRAIL binding blocks the inhibition of osteoclastogenesis. The protein is Tumor necrosis factor receptor superfamily member 11B (Tnfrsf11b) of Rattus norvegicus (Rat).